The sequence spans 428 residues: Enolase (428 aa).

Gln-163 contributes to the (2R)-2-phosphoglycerate binding site. Catalysis depends on Glu-205, which acts as the Proton donor. Positions 242, 285, and 312 each coordinate Mg(2+). (2R)-2-phosphoglycerate contacts are provided by Lys-337, Arg-366, Ser-367, and Lys-388. Lys-337 functions as the Proton acceptor in the catalytic mechanism.

Belongs to the enolase family. The cofactor is Mg(2+).

The protein localises to the cytoplasm. It is found in the secreted. The protein resides in the cell surface. It carries out the reaction (2R)-2-phosphoglycerate = phosphoenolpyruvate + H2O. It participates in carbohydrate degradation; glycolysis; pyruvate from D-glyceraldehyde 3-phosphate: step 4/5. In terms of biological role, catalyzes the reversible conversion of 2-phosphoglycerate (2-PG) into phosphoenolpyruvate (PEP). It is essential for the degradation of carbohydrates via glycolysis. In Neisseria meningitidis serogroup B (strain ATCC BAA-335 / MC58), this protein is Enolase.